A 179-amino-acid polypeptide reads, in one-letter code: Shikimate kinase (179 aa).

An ATP-binding site is contributed by 15–20 (GAGKTS). Threonine 19 contributes to the Mg(2+) binding site. Residues aspartate 37, arginine 61, and glycine 83 each coordinate substrate. Arginine 122 is an ATP binding site. Residue arginine 142 participates in substrate binding.

Belongs to the shikimate kinase family. In terms of assembly, monomer. Mg(2+) is required as a cofactor.

The protein resides in the cytoplasm. The catalysed reaction is shikimate + ATP = 3-phosphoshikimate + ADP + H(+). It participates in metabolic intermediate biosynthesis; chorismate biosynthesis; chorismate from D-erythrose 4-phosphate and phosphoenolpyruvate: step 5/7. In terms of biological role, catalyzes the specific phosphorylation of the 3-hydroxyl group of shikimic acid using ATP as a cosubstrate. This is Shikimate kinase from Coxiella burnetii (strain RSA 331 / Henzerling II).